Reading from the N-terminus, the 647-residue chain is DNA mismatch repair protein MutL (647 aa).

The protein belongs to the DNA mismatch repair MutL/HexB family.

Its function is as follows. This protein is involved in the repair of mismatches in DNA. It is required for dam-dependent methyl-directed DNA mismatch repair. May act as a 'molecular matchmaker', a protein that promotes the formation of a stable complex between two or more DNA-binding proteins in an ATP-dependent manner without itself being part of a final effector complex. The chain is DNA mismatch repair protein MutL from Bacillus thuringiensis (strain Al Hakam).